Here is a 587-residue protein sequence, read N- to C-terminus: RuBisCO large subunit-binding protein subunit alpha, chloroplastic (587 aa).

Residues 1–25 show a composition bias toward polar residues; sequence MASTNALSSTSILRSPTNQAQTSLS. Residues 1–33 form a disordered region; sequence MASTNALSSTSILRSPTNQAQTSLSKKVKQHGR. The N-terminal 47 residues, 1 to 47, are a transit peptide targeting the chloroplast; the sequence is MASTNALSSTSILRSPTNQAQTSLSKKVKQHGRVNFRQKPNRFVVKA.

Belongs to the chaperonin (HSP60) family. Oligomer of probably six alpha and six beta subunits.

It localises to the plastid. The protein localises to the chloroplast. Its function is as follows. This protein binds RuBisCO small and large subunits and is implicated in the assembly of the enzyme oligomer. This chain is RuBisCO large subunit-binding protein subunit alpha, chloroplastic, found in Pisum sativum (Garden pea).